A 335-amino-acid chain; its full sequence is Hsp90 co-chaperone Cdc37-like 1 (335 aa).

Residues 1–11 (MEQPWPPPGPW) are compositionally biased toward pro residues. A disordered region spans residues 1 to 42 (MEQPWPPPGPWSFPRTGGETEEESDLDVSPSSSHYSPVPDGG). The interval 2–170 (EQPWPPPGPW…YEQKIRHFGM (169 aa)) is self-association. Residues 27 to 40 (DVSPSSSHYSPVPD) are compositionally biased toward low complexity. A phosphoserine mark is found at Ser-32 and Ser-88. A coiled-coil region spans residues 84 to 120 (HNSESLDQEHAKAQTAVSELRQREEEWRQKEEALVQR). The tract at residues 147–276 (KTEEEDKSQS…SRVRLYAQSQ (130 aa)) is self-association and interaction with Hsp90. An interaction with Hsp70 region spans residues 266–335 (KSRVRLYAQS…EDDDRMMDTV (70 aa)). Residues 277–335 (SLQPVTVQNHVPHSGVGCIGSLESLPQNPDSLQCCTPAPLCSVDSVVHKEDDDRMMDTV) are required for interaction with STIP1.

Belongs to the CDC37 family. Self-associates. Forms complexes with Hsp70 and Hsp90. Interacts with CDC37, FKBP4, PPID and STIP1.

Its subcellular location is the cytoplasm. Co-chaperone that binds to numerous proteins and promotes their interaction with Hsp70 and Hsp90. The polypeptide is Hsp90 co-chaperone Cdc37-like 1 (Cdc37l1) (Mus musculus (Mouse)).